Here is a 415-residue protein sequence, read N- to C-terminus: Gamma-glutamyl phosphate reductase (415 aa).

The protein belongs to the gamma-glutamyl phosphate reductase family.

It localises to the cytoplasm. It carries out the reaction L-glutamate 5-semialdehyde + phosphate + NADP(+) = L-glutamyl 5-phosphate + NADPH + H(+). The protein operates within amino-acid biosynthesis; L-proline biosynthesis; L-glutamate 5-semialdehyde from L-glutamate: step 2/2. Functionally, catalyzes the NADPH-dependent reduction of L-glutamate 5-phosphate into L-glutamate 5-semialdehyde and phosphate. The product spontaneously undergoes cyclization to form 1-pyrroline-5-carboxylate. This is Gamma-glutamyl phosphate reductase from Desulforamulus reducens (strain ATCC BAA-1160 / DSM 100696 / MI-1) (Desulfotomaculum reducens).